A 469-amino-acid chain; its full sequence is Probable acetate kinase (469 aa).

N30 serves as a coordination point for Mg(2+). K37 is a binding site for ATP. Residue R122 participates in substrate binding. Residue D179 is the Proton donor/acceptor of the active site. 239–243 (HLGSG) serves as a coordination point for ATP. Residue E453 participates in Mg(2+) binding.

The protein belongs to the acetokinase family. Requires Mg(2+) as cofactor.

The enzyme catalyses acetate + ATP = acetyl phosphate + ADP. Its pathway is metabolic intermediate biosynthesis; acetyl-CoA biosynthesis; acetyl-CoA from acetate: step 1/2. This Neurospora crassa (strain ATCC 24698 / 74-OR23-1A / CBS 708.71 / DSM 1257 / FGSC 987) protein is Probable acetate kinase.